The following is a 363-amino-acid chain: 3-ketodihydrosphingosine reductase TSC10 (363 aa).

Position 10 (Leu-10) interacts with NADP(+). 3 residues coordinate NADPH: Gly-13, Ser-15, and Gly-17. Residues 13–17 (GGSQG) carry the GXSXG motif. Leu-18 provides a ligand contact to NADP(+). Residues Arg-40, Lys-44, Asp-131, and Leu-132 each coordinate NADPH. Asp-131 lines the NADP(+) pocket. Ser-206 functions as the Proton donor in the catalytic mechanism. Residues Tyr-220, Lys-224, and Ser-253 each coordinate NADP(+). Tyr-220 serves as the catalytic Proton acceptor. Lys-224 acts as the Lowers pKa of active site Tyr in catalysis. The chain crosses the membrane as a helical span at residues 324-344 (FVQWLIGVIANLLVVPFYMVL).

The protein belongs to the short-chain dehydrogenases/reductases (SDR) family.

It is found in the endoplasmic reticulum membrane. The enzyme catalyses sphinganine + NADP(+) = 3-oxosphinganine + NADPH + H(+). Its pathway is lipid metabolism; sphingolipid metabolism. Catalyzes the reduction of 3'-oxosphinganine (3-ketodihydrosphingosine/KDS) to sphinganine (dihydrosphingosine/DHS), the second step of de novo sphingolipid biosynthesis. The sequence is that of 3-ketodihydrosphingosine reductase TSC10 (TSC10) from Candida glabrata (strain ATCC 2001 / BCRC 20586 / JCM 3761 / NBRC 0622 / NRRL Y-65 / CBS 138) (Yeast).